Here is a 166-residue protein sequence, read N- to C-terminus: Lipoprotein signal peptidase (166 aa).

The next 3 membrane-spanning stretches (helical) occupy residues 12–32, 66–86, and 101–121; these read LPIA…KYLV, MEGW…LWLW, and AMII…GYVI. Residues Asp-122 and Asp-140 contribute to the active site. The chain crosses the membrane as a helical span at residues 132–152; that stretch reads SFAVFNLADSFITVGAGAIIL.

The protein belongs to the peptidase A8 family.

It is found in the cell inner membrane. It carries out the reaction Release of signal peptides from bacterial membrane prolipoproteins. Hydrolyzes -Xaa-Yaa-Zaa-|-(S,diacylglyceryl)Cys-, in which Xaa is hydrophobic (preferably Leu), and Yaa (Ala or Ser) and Zaa (Gly or Ala) have small, neutral side chains.. Its pathway is protein modification; lipoprotein biosynthesis (signal peptide cleavage). Its function is as follows. This protein specifically catalyzes the removal of signal peptides from prolipoproteins. The polypeptide is Lipoprotein signal peptidase (Sinorhizobium fredii (strain NBRC 101917 / NGR234)).